The chain runs to 730 residues: Polyribonucleotide nucleotidyltransferase (730 aa).

Residues aspartate 489 and aspartate 495 each coordinate Mg(2+). The region spanning 556–615 (PRIEVMKIAVDKIREVIGSGGKVIREIVEKTGAKINIEDDGTIKIASASGDAIKAAINWI) is the KH domain. The S1 motif domain occupies 625-693 (GQIYEGTVVK…ERGKTRLSMK (69 aa)). Residues 700-730 (GEDLEAKAKAERDAARAAAPAATGDEAGAAE) form a disordered region. A compositionally biased stretch (basic and acidic residues) spans 703–714 (LEAKAKAERDAA). Residues 715-730 (RAAAPAATGDEAGAAE) show a composition bias toward low complexity.

Belongs to the polyribonucleotide nucleotidyltransferase family. The cofactor is Mg(2+).

The protein resides in the cytoplasm. It carries out the reaction RNA(n+1) + phosphate = RNA(n) + a ribonucleoside 5'-diphosphate. Involved in mRNA degradation. Catalyzes the phosphorolysis of single-stranded polyribonucleotides processively in the 3'- to 5'-direction. The chain is Polyribonucleotide nucleotidyltransferase from Xanthobacter autotrophicus (strain ATCC BAA-1158 / Py2).